We begin with the raw amino-acid sequence, 324 residues long: Homoserine kinase (324 aa).

Proline 87–alanine 97 serves as a coordination point for ATP.

It belongs to the GHMP kinase family. Homoserine kinase subfamily.

It is found in the cytoplasm. The enzyme catalyses L-homoserine + ATP = O-phospho-L-homoserine + ADP + H(+). Its pathway is amino-acid biosynthesis; L-threonine biosynthesis; L-threonine from L-aspartate: step 4/5. Functionally, catalyzes the ATP-dependent phosphorylation of L-homoserine to L-homoserine phosphate. The protein is Homoserine kinase of Symbiobacterium thermophilum (strain DSM 24528 / JCM 14929 / IAM 14863 / T).